Here is a 435-residue protein sequence, read N- to C-terminus: Trigger factor (435 aa).

One can recognise a PPIase FKBP-type domain in the interval 162–247 (GDRVIIDFKG…VKNVAEATLP (86 aa)).

It belongs to the FKBP-type PPIase family. Tig subfamily.

Its subcellular location is the cytoplasm. The catalysed reaction is [protein]-peptidylproline (omega=180) = [protein]-peptidylproline (omega=0). Involved in protein export. Acts as a chaperone by maintaining the newly synthesized protein in an open conformation. Functions as a peptidyl-prolyl cis-trans isomerase. The polypeptide is Trigger factor (Chromobacterium violaceum (strain ATCC 12472 / DSM 30191 / JCM 1249 / CCUG 213 / NBRC 12614 / NCIMB 9131 / NCTC 9757 / MK)).